Reading from the N-terminus, the 227-residue chain is AN1-type zinc finger protein 3 (227 aa).

An A20-type zinc finger spans residues 12–44 (PSLPPRCPCGFWGSSKTMNLCSKCFADFQKKQP). Zn(2+) is bound by residues Cys18, Cys20, Cys32, and Cys35. Disordered regions lie at residues 41–99 (KKQP…TEEC) and 113–151 (PTKR…RSKQ). 2 stretches are compositionally biased toward low complexity: residues 49 to 59 (TPSTSNSQSDL) and 66 to 77 (SDNNNTSVTTPT). 2 stretches are compositionally biased toward polar residues: residues 78 to 96 (LSPS…SPST) and 113 to 127 (PTKR…SENE). The segment covering 135-148 (RLVENPERPEESGR) has biased composition (basic and acidic residues). The segment at 151–200 (QKSRRRCFQCQTKLELVQQELGSCRCGYVFCMLHRLPEQHDCTFDHMGRG) adopts an AN1-type zinc-finger fold. Zn(2+) is bound by residues Cys157, Cys160, Cys174, Cys176, Cys181, His184, His190, and Cys192.

In terms of tissue distribution, expressed in testis.

This chain is AN1-type zinc finger protein 3 (Zfand3), found in Mus musculus (Mouse).